The following is a 222-amino-acid chain: Ribosomal RNA small subunit methyltransferase I (222 aa).

Belongs to the methyltransferase superfamily. RsmI family.

The protein resides in the cytoplasm. The catalysed reaction is cytidine(1402) in 16S rRNA + S-adenosyl-L-methionine = 2'-O-methylcytidine(1402) in 16S rRNA + S-adenosyl-L-homocysteine + H(+). Its function is as follows. Catalyzes the 2'-O-methylation of the ribose of cytidine 1402 (C1402) in 16S rRNA. The protein is Ribosomal RNA small subunit methyltransferase I of Thermotoga maritima (strain ATCC 43589 / DSM 3109 / JCM 10099 / NBRC 100826 / MSB8).